The primary structure comprises 230 residues: NAD(P)H-quinone oxidoreductase subunit K, chloroplastic (230 aa).

Residues C43, C44, C108, and C139 each coordinate [4Fe-4S] cluster.

Belongs to the complex I 20 kDa subunit family. In terms of assembly, NDH is composed of at least 16 different subunits, 5 of which are encoded in the nucleus. [4Fe-4S] cluster serves as cofactor.

It is found in the plastid. It localises to the chloroplast thylakoid membrane. It carries out the reaction a plastoquinone + NADH + (n+1) H(+)(in) = a plastoquinol + NAD(+) + n H(+)(out). The enzyme catalyses a plastoquinone + NADPH + (n+1) H(+)(in) = a plastoquinol + NADP(+) + n H(+)(out). In terms of biological role, NDH shuttles electrons from NAD(P)H:plastoquinone, via FMN and iron-sulfur (Fe-S) centers, to quinones in the photosynthetic chain and possibly in a chloroplast respiratory chain. The immediate electron acceptor for the enzyme in this species is believed to be plastoquinone. Couples the redox reaction to proton translocation, and thus conserves the redox energy in a proton gradient. The chain is NAD(P)H-quinone oxidoreductase subunit K, chloroplastic from Lotus japonicus (Lotus corniculatus var. japonicus).